Here is a 208-residue protein sequence, read N- to C-terminus: U11/U12 small nuclear ribonucleoprotein 35 kDa protein (208 aa).

The region spanning 50–128 (LTLFVARLNP…YELLVDVEQE (79 aa)) is the RRM domain. Residues 133–208 (GWRPRRLGGG…TEDRTHRHTY (76 aa)) are disordered. Positions 171-208 (RPAEPRGRETERERDRRDYRDRRHERTHTEDRTHRHTY) are enriched in basic and acidic residues.

Its subcellular location is the nucleus. The polypeptide is U11/U12 small nuclear ribonucleoprotein 35 kDa protein (snrnp35) (Danio rerio (Zebrafish)).